A 344-amino-acid chain; its full sequence is Methionine import ATP-binding protein MetN (344 aa).

Residues Ile2–Ile241 form the ABC transporter domain. Gly38–Ser45 is a binding site for ATP.

This sequence belongs to the ABC transporter superfamily. Methionine importer (TC 3.A.1.24) family. As to quaternary structure, the complex is composed of two ATP-binding proteins (MetN), two transmembrane proteins (MetI) and a solute-binding protein (MetQ).

It localises to the cell inner membrane. The catalysed reaction is L-methionine(out) + ATP + H2O = L-methionine(in) + ADP + phosphate + H(+). It catalyses the reaction D-methionine(out) + ATP + H2O = D-methionine(in) + ADP + phosphate + H(+). Its function is as follows. Part of the ABC transporter complex MetNIQ involved in methionine import. Responsible for energy coupling to the transport system. This Aliivibrio fischeri (strain ATCC 700601 / ES114) (Vibrio fischeri) protein is Methionine import ATP-binding protein MetN.